Reading from the N-terminus, the 137-residue chain is Nucleoside diphosphate kinase (137 aa).

6 residues coordinate ATP: Lys9, Phe57, Arg85, Thr91, Arg102, and Asn112. His115 acts as the Pros-phosphohistidine intermediate in catalysis.

Belongs to the NDK family. Homotetramer. Mg(2+) is required as a cofactor.

Its subcellular location is the cytoplasm. The catalysed reaction is a 2'-deoxyribonucleoside 5'-diphosphate + ATP = a 2'-deoxyribonucleoside 5'-triphosphate + ADP. It carries out the reaction a ribonucleoside 5'-diphosphate + ATP = a ribonucleoside 5'-triphosphate + ADP. In terms of biological role, major role in the synthesis of nucleoside triphosphates other than ATP. The ATP gamma phosphate is transferred to the NDP beta phosphate via a ping-pong mechanism, using a phosphorylated active-site intermediate. The chain is Nucleoside diphosphate kinase from Citrifermentans bemidjiense (strain ATCC BAA-1014 / DSM 16622 / JCM 12645 / Bem) (Geobacter bemidjiensis).